The primary structure comprises 535 residues: Probable monogalactosyldiacylglycerol synthase, chloroplastic (535 aa).

The transit peptide at 1–113 (MMQHSSSVTQ…KIPLGFASVG (113 aa)) directs the protein to the chloroplast.

The protein belongs to the glycosyltransferase 28 family.

The protein resides in the plastid. The protein localises to the chloroplast membrane. It carries out the reaction a 1,2-diacyl-sn-glycerol + UDP-alpha-D-galactose = a 1,2-diacyl-3-O-(beta-D-galactosyl)-sn-glycerol + UDP + H(+). Involved in the synthesis of the major structural component of photosynthetic membranes. This Nicotiana tabacum (Common tobacco) protein is Probable monogalactosyldiacylglycerol synthase, chloroplastic (MGD A).